A 307-amino-acid chain; its full sequence is tRNA pseudouridine synthase B (307 aa).

Residue Asp41 is the Nucleophile of the active site.

The protein belongs to the pseudouridine synthase TruB family. Type 1 subfamily.

It carries out the reaction uridine(55) in tRNA = pseudouridine(55) in tRNA. Its function is as follows. Responsible for synthesis of pseudouridine from uracil-55 in the psi GC loop of transfer RNAs. This is tRNA pseudouridine synthase B from Prochlorococcus marinus (strain AS9601).